A 452-amino-acid polypeptide reads, in one-letter code: Tubulin alpha-2/alpha-4 chain (452 aa).

Position 11 (Gln-11) interacts with GTP. Lys-40 is subject to N6-acetyllysine. GTP contacts are provided by Glu-71, Ser-140, Gly-144, Thr-145, Thr-179, Asn-206, and Asn-228. A Mg(2+)-binding site is contributed by Glu-71. Glu-254 is an active-site residue. The segment at 432–452 is disordered; it reads YEEVGVDSVEGEGEEEGGEEY.

Belongs to the tubulin family. As to quaternary structure, dimer of alpha and beta chains. A typical microtubule is a hollow water-filled tube with an outer diameter of 25 nm and an inner diameter of 15 nM. Alpha-beta heterodimers associate head-to-tail to form protofilaments running lengthwise along the microtubule wall with the beta-tubulin subunit facing the microtubule plus end conferring a structural polarity. Microtubules usually have 13 protofilaments but different protofilament numbers can be found in some organisms and specialized cells. It depends on Mg(2+) as a cofactor. In terms of processing, undergoes a tyrosination/detyrosination cycle, the cyclic removal and re-addition of a C-terminal tyrosine residue by the enzymes tubulin tyrosine carboxypeptidase (TTCP) and tubulin tyrosine ligase (TTL), respectively. Post-translationally, acetylation of alpha chains at Lys-40 stabilizes microtubules and affects affinity and processivity of microtubule motors. This modification has a role in multiple cellular functions, ranging from cell motility, cell cycle progression or cell differentiation to intracellular trafficking and signaling.

Its subcellular location is the cytoplasm. The protein resides in the cytoskeleton. It carries out the reaction GTP + H2O = GDP + phosphate + H(+). Tubulin is the major constituent of microtubules, a cylinder consisting of laterally associated linear protofilaments composed of alpha- and beta-tubulin heterodimers. Microtubules grow by the addition of GTP-tubulin dimers to the microtubule end, where a stabilizing cap forms. Below the cap, tubulin dimers are in GDP-bound state, owing to GTPase activity of alpha-tubulin. The protein is Tubulin alpha-2/alpha-4 chain (TUB2) of Patella vulgata (Common limpet).